A 218-amino-acid chain; its full sequence is MAEISRIQYEMEYTEGISQRMRVPEKLKVAPPNADLEQGFQDGVPNASVIMQVPERIVVTGNNEDISFSRPADLDLIQSTPFKPLALKTPPRVLTLSERPLDFLDLERPPPTPQSEEIRAVGRLKRERSMSENAVRQNGQLVRNDSMYGISSLDAAVEGASEDMSVVDAASLRRQIIKLNRRLQLLEEENKERAKREMVMYSITVAFWLLNSWLWFRR.

The Cytoplasmic portion of the chain corresponds to 1 to 198 (MAEISRIQYE…ENKERAKREM (198 aa)). Threonine 89 carries the phosphothreonine modification. Residues serine 129, serine 131, serine 146, and serine 171 each carry the phosphoserine modification. The stretch at 167 to 198 (VDAASLRRQIIKLNRRLQLLEEENKERAKREM) forms a coiled coil. Residues 199-216 (VMYSITVAFWLLNSWLWF) traverse the membrane as a helical; Anchor for type IV membrane protein segment. The Mitochondrial intermembrane segment spans residues 217–218 (RR).

This sequence belongs to the Tango11 family. In terms of assembly, homodimer. Interacts with DNM1L. Interacts with C11orf65/MFI; the interaction inhibits MFF interaction with DNM1L.

The protein resides in the mitochondrion outer membrane. The protein localises to the peroxisome. It localises to the cytoplasmic vesicle. It is found in the secretory vesicle. Its subcellular location is the synaptic vesicle. Functionally, plays a role in mitochondrial and peroxisomal fission. Promotes the recruitment and association of the fission mediator dynamin-related protein 1 (DNM1L) to the mitochondrial surface. May be involved in regulation of synaptic vesicle membrane dynamics by recruitment of DNM1L to clathrin-containing vesicles. The sequence is that of Mitochondrial fission factor (Mff) from Rattus norvegicus (Rat).